The chain runs to 188 residues: dCTP deaminase (188 aa).

DCTP is bound by residues 111–116 (KSTYAR), 135–137 (TLE), Gln-156, Tyr-170, and Gln-180. Glu-137 acts as the Proton donor/acceptor in catalysis.

The protein belongs to the dCTP deaminase family. Homotrimer.

It carries out the reaction dCTP + H2O + H(+) = dUTP + NH4(+). It participates in pyrimidine metabolism; dUMP biosynthesis; dUMP from dCTP (dUTP route): step 1/2. Its function is as follows. Catalyzes the deamination of dCTP to dUTP. The chain is dCTP deaminase from Legionella pneumophila (strain Paris).